A 301-amino-acid chain; its full sequence is Transposase InsD for insertion element IS2D (301 aa).

The 184-residue stretch at 106 to 289 (KPAVPPSKRA…SPREYLRQRA (184 aa)) folds into the Integrase catalytic domain.

Functionally, involved in the transposition of the insertion sequence IS2. This Escherichia coli (strain K12) protein is Transposase InsD for insertion element IS2D (insD2).